Here is a 308-residue protein sequence, read N- to C-terminus: MFDPETLRTFISVAETGSFSKAAERLCKTTATISYRIKLLEENTGVGLFFRTTRSVSLTAAGSHLLSQAKDWLAWLDSMPDELRQVNDGVERQVNIVVNNLLYSPQAVASLLSWLNARYPFTQFHFSRQIYMGVWDSLLYEGFSLAIGVTGTEPLANTFMLDPLGSVQWRFVMSADHPLAHVSGPLTEAQLRRFPAINIEDSARTLTKRVAWRLPGQKEIIVPDMETKIAAHLAGVGIGFVPQPLCQTLIDKNELVSCTIPTMRPPSPLSLAWHKFGGGKAVEDIVKLFTQRQPEIAGFLSIFNTVRC.

Positions 2 to 59 (FDPETLRTFISVAETGSFSKAAERLCKTTATISYRIKLLEENTGVGLFFRTTRSVSLT) constitute an HTH lysR-type domain. The H-T-H motif DNA-binding region spans 19–38 (FSKAAERLCKTTATISYRIK).

The protein belongs to the LysR transcriptional regulatory family.

Its function is as follows. Positive regulator essential for the expression of allD operon. Binds to the allD promoter. The protein is HTH-type transcriptional activator AllS (allS) of Salmonella paratyphi A (strain ATCC 9150 / SARB42).